Consider the following 852-residue polypeptide: Patatin-like phospholipase domain-containing protein CaO19.1504 (852 aa).

Over residues 41-52 (ATTDITTTPIND) the composition is skewed to low complexity. Residues 41 to 184 (ATTDITTTPI…KKTTPTSSTS (144 aa)) form a disordered region. The span at 75–95 (INGTVSDSSSITDEDIMNSSY) shows a compositional bias: polar residues. Positions 101–110 (SSTNLKSNST) are enriched in low complexity. Residues 113–122 (DDDDDDDDDD) are compositionally biased toward acidic residues. Low complexity-rich tracts occupy residues 129 to 142 (SGTTDNTSTTSLSS) and 158 to 171 (GGSRSSSSSKKGSS). A helical transmembrane segment spans residues 207–227 (WPILIFVFSWIGILGIFYFMI). Residues 396-588 (LCLSGGACFA…RTDIPIEALN (193 aa)) form the PNPLA domain. The GXSXG signature appears at 427–431 (GTSGG). Serine 429 serves as the catalytic Nucleophile. The active-site Proton acceptor is the aspartate 575. A disordered region spans residues 800–840 (KKLLDELDNEDEEEDEEEEEVDVDDDDDDDDDSLSDSFEIT). A compositionally biased stretch (acidic residues) spans 805 to 833 (ELDNEDEEEDEEEEEVDVDDDDDDDDDSL).

Belongs to the PLPL family.

The protein localises to the membrane. Functionally, probable lipid hydrolase. The polypeptide is Patatin-like phospholipase domain-containing protein CaO19.1504 (Candida albicans (strain SC5314 / ATCC MYA-2876) (Yeast)).